A 114-amino-acid polypeptide reads, in one-letter code: NTGAKAPRKQLANKAARKSTNVNAVSGVKKPHRFRPGTVALREIRRFQKSTELLIRKLPFQRLVREIAQEYKSDLRFQSQAVLALQEAAEAYLVGLFEDTNLCAIHAKRVTIMP.

Residues 1–29 are disordered; the sequence is NTGAKAPRKQLANKAARKSTNVNAVSGVK.

It belongs to the histone H3 family. In terms of assembly, the nucleosome is a histone octamer containing two molecules each of H2A, H2B, H3 and H4 assembled in one H3-H4 heterotetramer and two H2A-H2B heterodimers. The octamer wraps approximately 147 bp of DNA.

It localises to the nucleus. The protein localises to the chromosome. In terms of biological role, core component of nucleosome. Nucleosomes wrap and compact DNA into chromatin, limiting DNA accessibility to the cellular machineries which require DNA as a template. Histones thereby play a central role in transcription regulation, DNA repair, DNA replication and chromosomal stability. DNA accessibility is regulated via a complex set of post-translational modifications of histones, also called histone code, and nucleosome remodeling. The polypeptide is Histone H3-5 (H3-5) (Stylonychia lemnae (Ciliate)).